The following is a 208-amino-acid chain: Large ribosomal subunit protein bL25 (208 aa).

A compositionally biased stretch (acidic residues) spans 185 to 195 (DLEEETGEAEG). The disordered stretch occupies residues 185 to 208 (DLEEETGEAEGETAAAPAEEGAES). Over residues 196-208 (ETAAAPAEEGAES) the composition is skewed to low complexity.

It belongs to the bacterial ribosomal protein bL25 family. CTC subfamily. Part of the 50S ribosomal subunit; part of the 5S rRNA/L5/L18/L25 subcomplex. Contacts the 5S rRNA. Binds to the 5S rRNA independently of L5 and L18.

This is one of the proteins that binds to the 5S RNA in the ribosome where it forms part of the central protuberance. The protein is Large ribosomal subunit protein bL25 of Rhodococcus opacus (strain B4).